A 548-amino-acid polypeptide reads, in one-letter code: Chaperonin GroEL (548 aa).

ATP is bound by residues 30-33 (TLGP), Lys-51, 87-91 (DGTTT), Gly-415, 479-481 (NAA), and Asp-495. A disordered region spans residues 526–548 (KEDKSSDLGSAPAGGMGGMGGMM). Residues 537 to 548 (PAGGMGGMGGMM) show a composition bias toward gly residues.

It belongs to the chaperonin (HSP60) family. Forms a cylinder of 14 subunits composed of two heptameric rings stacked back-to-back. Interacts with the co-chaperonin GroES.

It localises to the cytoplasm. The catalysed reaction is ATP + H2O + a folded polypeptide = ADP + phosphate + an unfolded polypeptide.. Together with its co-chaperonin GroES, plays an essential role in assisting protein folding. The GroEL-GroES system forms a nano-cage that allows encapsulation of the non-native substrate proteins and provides a physical environment optimized to promote and accelerate protein folding. In Buchnera aphidicola subsp. Pterocomma populeum, this protein is Chaperonin GroEL.